The primary structure comprises 177 residues: N5-carboxyaminoimidazole ribonucleotide mutase (177 aa).

Residues Ser-18, Asp-21, and Arg-48 each contribute to the substrate site.

The protein belongs to the AIR carboxylase family. Class I subfamily.

It carries out the reaction 5-carboxyamino-1-(5-phospho-D-ribosyl)imidazole + H(+) = 5-amino-1-(5-phospho-D-ribosyl)imidazole-4-carboxylate. Its pathway is purine metabolism; IMP biosynthesis via de novo pathway; 5-amino-1-(5-phospho-D-ribosyl)imidazole-4-carboxylate from 5-amino-1-(5-phospho-D-ribosyl)imidazole (N5-CAIR route): step 2/2. Its function is as follows. Catalyzes the conversion of N5-carboxyaminoimidazole ribonucleotide (N5-CAIR) to 4-carboxy-5-aminoimidazole ribonucleotide (CAIR). The sequence is that of N5-carboxyaminoimidazole ribonucleotide mutase from Pyrococcus horikoshii (strain ATCC 700860 / DSM 12428 / JCM 9974 / NBRC 100139 / OT-3).